The primary structure comprises 304 residues: 15-cis-phytoene synthase (304 aa).

It belongs to the phytoene/squalene synthase family. The cofactor is ATP. Mn(2+) is required as a cofactor. Requires Mg(2+) as cofactor.

It catalyses the reaction 2 (2E,6E,10E)-geranylgeranyl diphosphate = 15-cis-phytoene + 2 diphosphate. The protein operates within carotenoid biosynthesis; astaxanthin biosynthesis. Its pathway is carotenoid biosynthesis; phytoene biosynthesis. Functionally, involved in the biosynthesis of carotenoids for the production of astaxanthin. Catalyzes the condensation of two molecules of geranylgeranyl diphosphate (GGPP) to give prephytoene diphosphate (PPPP) and the subsequent rearrangement of the cyclopropylcarbinyl intermediate to yield 15-cis phytoene. This Paracoccus sp. (strain N81106 / MBIC 01143) (Agrobacterium aurantiacum) protein is 15-cis-phytoene synthase (crtB).